Here is a 62-residue protein sequence, read N- to C-terminus: Large ribosomal subunit protein eL24 (62 aa).

Zn(2+) contacts are provided by cysteine 6, cysteine 9, cysteine 32, and cysteine 36. The segment at cysteine 6 to cysteine 36 adopts a C4-type zinc-finger fold.

This sequence belongs to the eukaryotic ribosomal protein eL24 family. Part of the 50S ribosomal subunit. Forms a cluster with proteins L3 and L14. Zn(2+) serves as cofactor.

Its function is as follows. Binds to the 23S rRNA. The sequence is that of Large ribosomal subunit protein eL24 from Methanococcoides burtonii (strain DSM 6242 / NBRC 107633 / OCM 468 / ACE-M).